The following is a 323-amino-acid chain: tRNA U34 carboxymethyltransferase (323 aa).

Residues Lys-91, Trp-105, Lys-110, Gly-130, 152-154 (DPS), 181-182 (IE), Met-196, Tyr-200, and Arg-315 contribute to the carboxy-S-adenosyl-L-methionine site.

This sequence belongs to the class I-like SAM-binding methyltransferase superfamily. CmoB family. Homotetramer.

The catalysed reaction is carboxy-S-adenosyl-L-methionine + 5-hydroxyuridine(34) in tRNA = 5-carboxymethoxyuridine(34) in tRNA + S-adenosyl-L-homocysteine + H(+). Functionally, catalyzes carboxymethyl transfer from carboxy-S-adenosyl-L-methionine (Cx-SAM) to 5-hydroxyuridine (ho5U) to form 5-carboxymethoxyuridine (cmo5U) at position 34 in tRNAs. The protein is tRNA U34 carboxymethyltransferase of Vibrio cholerae serotype O1 (strain ATCC 39541 / Classical Ogawa 395 / O395).